A 67-amino-acid chain; its full sequence is ATP synthase F(0) complex subunit 8 (67 aa).

Residues 8 to 24 (TWFINIVSMILTLFIVF) form a helical membrane-spanning segment. Residue Lys54 is modified to N6-acetyllysine; alternate. Lys54 carries the post-translational modification N6-succinyllysine; alternate. The residue at position 57 (Lys57) is an N6-acetyllysine.

Belongs to the ATPase protein 8 family. As to quaternary structure, component of the ATP synthase complex composed at least of ATP5F1A/subunit alpha, ATP5F1B/subunit beta, ATP5MC1/subunit c (homooctomer), MT-ATP6/subunit a, MT-ATP8/subunit 8, ATP5ME/subunit e, ATP5MF/subunit f, ATP5MG/subunit g, ATP5MK/subunit k, ATP5MJ/subunit j, ATP5F1C/subunit gamma, ATP5F1D/subunit delta, ATP5F1E/subunit epsilon, ATP5PF/subunit F6, ATP5PB/subunit b, ATP5PD/subunit d, ATP5PO/subunit OSCP. ATP synthase complex consists of a soluble F(1) head domain (subunits alpha(3) and beta(3)) - the catalytic core - and a membrane F(0) domain - the membrane proton channel (subunits c, a, 8, e, f, g, k and j). These two domains are linked by a central stalk (subunits gamma, delta, and epsilon) rotating inside the F1 region and a stationary peripheral stalk (subunits F6, b, d, and OSCP). Interacts with PRICKLE3.

It is found in the mitochondrion membrane. Its function is as follows. Subunit 8, of the mitochondrial membrane ATP synthase complex (F(1)F(0) ATP synthase or Complex V) that produces ATP from ADP in the presence of a proton gradient across the membrane which is generated by electron transport complexes of the respiratory chain. ATP synthase complex consist of a soluble F(1) head domain - the catalytic core - and a membrane F(1) domain - the membrane proton channel. These two domains are linked by a central stalk rotating inside the F(1) region and a stationary peripheral stalk. During catalysis, ATP synthesis in the catalytic domain of F(1) is coupled via a rotary mechanism of the central stalk subunits to proton translocation. In vivo, can only synthesize ATP although its ATP hydrolase activity can be activated artificially in vitro. Part of the complex F(0) domain. This chain is ATP synthase F(0) complex subunit 8, found in Equus caballus (Horse).